The following is a 71-amino-acid chain: uncharacterized protein (71 aa).

A disordered region spans residues 1–71; that stretch reads MLFETLKSLS…AFFSRPFYSE (71 aa). Polar residues predominate over residues 7 to 33; sequence KSLSQQNGGQFSDEQSFESPISSSFNG. Low complexity predominate over residues 35-65; it reads SMPFGSPSSTMSSSYKGNTNSSTKSSSAFFS.

This is an uncharacterized protein from Dictyostelium discoideum (Social amoeba).